We begin with the raw amino-acid sequence, 283 residues long: Phosphatidylserine decarboxylase proenzyme (283 aa).

Residues D90, H143, and S248 each act as charge relay system; for autoendoproteolytic cleavage activity in the active site. Catalysis depends on S248, which acts as the Schiff-base intermediate with substrate; via pyruvic acid; for decarboxylase activity. Position 248 is a pyruvic acid (Ser); by autocatalysis (S248).

This sequence belongs to the phosphatidylserine decarboxylase family. PSD-B subfamily. Prokaryotic type I sub-subfamily. In terms of assembly, heterodimer of a large membrane-associated beta subunit and a small pyruvoyl-containing alpha subunit. Pyruvate is required as a cofactor. In terms of processing, is synthesized initially as an inactive proenzyme. Formation of the active enzyme involves a self-maturation process in which the active site pyruvoyl group is generated from an internal serine residue via an autocatalytic post-translational modification. Two non-identical subunits are generated from the proenzyme in this reaction, and the pyruvate is formed at the N-terminus of the alpha chain, which is derived from the carboxyl end of the proenzyme. The autoendoproteolytic cleavage occurs by a canonical serine protease mechanism, in which the side chain hydroxyl group of the serine supplies its oxygen atom to form the C-terminus of the beta chain, while the remainder of the serine residue undergoes an oxidative deamination to produce ammonia and the pyruvoyl prosthetic group on the alpha chain. During this reaction, the Ser that is part of the protease active site of the proenzyme becomes the pyruvoyl prosthetic group, which constitutes an essential element of the active site of the mature decarboxylase.

The protein localises to the cell membrane. It carries out the reaction a 1,2-diacyl-sn-glycero-3-phospho-L-serine + H(+) = a 1,2-diacyl-sn-glycero-3-phosphoethanolamine + CO2. Its pathway is phospholipid metabolism; phosphatidylethanolamine biosynthesis; phosphatidylethanolamine from CDP-diacylglycerol: step 2/2. Catalyzes the formation of phosphatidylethanolamine (PtdEtn) from phosphatidylserine (PtdSer). The sequence is that of Phosphatidylserine decarboxylase proenzyme from Francisella tularensis subsp. holarctica (strain OSU18).